Consider the following 180-residue polypeptide: Stathmin-3 (180 aa).

S-palmitoyl cysteine attachment occurs at residues cysteine 22 and cysteine 24. The region spanning glycine 38 to glycine 180 is the SLD domain. A phosphoserine mark is found at serine 50, serine 60, serine 65, serine 68, serine 72, serine 73, and serine 81. A disordered region spans residues lysine 59–leucine 82. Over residues serine 60 to proline 74 the composition is skewed to low complexity. The stretch at proline 75 to serine 179 forms a coiled coil.

Belongs to the stathmin family. Interacts with STAT3. Interacts with CLU (secreted form); this interaction may act as an important modulator during neuronal differentiation. Post-translationally, N-terminal palmitoylation promotes specific anchoring to the cytosolic leaflet of Golgi membranes and subsequent vesicular trafficking along dendrites and axons. Neuronal Stathmins are substrates for palmitoyltransferases ZDHHC3, ZDHHC7 and ZDHHC15. Neuron specific.

Its subcellular location is the golgi apparatus. It is found in the cell projection. It localises to the growth cone. The protein localises to the axon. The protein resides in the cytoplasm. Its subcellular location is the cytosol. Its function is as follows. Exhibits microtubule-destabilizing activity, which is antagonized by STAT3. This Homo sapiens (Human) protein is Stathmin-3 (STMN3).